Consider the following 87-residue polypeptide: HssA/B-like protein 28 (87 aa).

It belongs to the hssA/B family.

The protein is HssA/B-like protein 28 (hssl28) of Dictyostelium discoideum (Social amoeba).